A 265-amino-acid chain; its full sequence is tRNA (guanine-N(7)-)-methyltransferase (265 aa).

The S-adenosyl-L-methionine site is built by Glu96, Glu121, Asp148, and Asp170. The active site involves Asp170. Substrate-binding residues include Lys174 and Asp206.

It belongs to the class I-like SAM-binding methyltransferase superfamily. TrmB family.

It carries out the reaction guanosine(46) in tRNA + S-adenosyl-L-methionine = N(7)-methylguanosine(46) in tRNA + S-adenosyl-L-homocysteine. Its pathway is tRNA modification; N(7)-methylguanine-tRNA biosynthesis. Catalyzes the formation of N(7)-methylguanine at position 46 (m7G46) in tRNA. The chain is tRNA (guanine-N(7)-)-methyltransferase from Rhodopseudomonas palustris (strain ATCC BAA-98 / CGA009).